A 382-amino-acid chain; its full sequence is Protein delta homolog 2 (382 aa).

The first 26 residues, 1 to 26 (MPSGCRCLNLVCLLCILGATSQPARA), serve as a signal peptide directing secretion. EGF-like domains lie at 27–58 (DDCSSHCDLAHGCCAPDGSCRCDPGWEGLHCE), 62–89 (RMPGCQHGTCHQPWQCICHSGWAGKFCD), 91–129 (DEHICTSQSPCQNGGQCVYDGGGEYHCVCLPGFHGRGCE), and 131–172 (KAGP…AHCE). Topologically, residues 27–305 (DDCSSHCDLA…RQESGLGESS (279 aa)) are extracellular. Intrachain disulfides connect Cys29-Cys40, Cys33-Cys46, Cys48-Cys57, Cys66-Cys71, Cys79-Cys88, Cys95-Cys107, Cys101-Cys117, Cys119-Cys128, Cys135-Cys148, Cys142-Cys160, Cys162-Cys171, Cys178-Cys189, Cys183-Cys198, Cys200-Cys209, Cys216-Cys227, Cys221-Cys236, and Cys238-Cys247. Asn157 carries N-linked (GlcNAc...) asparagine glycosylation. The 37-residue stretch at 174-210 (NVDDCLMRPCANGATCIDGINRFSCLCPEGFAGRFCT) folds into the EGF-like 5; calcium-binding domain. The EGF-like 6; calcium-binding domain occupies 212-248 (NLDDCASRPCQRGARCRDRVHDFDCLCPSGYGGKTCE). The chain crosses the membrane as a helical span at residues 306-326 (LVALVVFGSLTAALVLATVLL). Residues 327 to 382 (TLRAWRRGICPTGPCCYPAPHYAPARQDQECQVSMLPAGFPLSPDLPPEPGKTTAL) are Cytoplasmic-facing.

In terms of tissue distribution, detected in a number of tissues including lung, brain, adrenal gland, testis, adult liver, placenta, ovary and thymus. Not detected in fetal liver or in adult spleen, muscle and heart.

It is found in the membrane. Functionally, regulates adipogenesis. The protein is Protein delta homolog 2 (Dlk2) of Mus musculus (Mouse).